Here is an 823-residue protein sequence, read N- to C-terminus: Protein Jade-3 (823 aa).

The interval methionine 1–lysine 32 is disordered. The segment covering serine 8 to serine 25 has biased composition (low complexity). N6-acetyllysine occurs at positions 30 and 32. A Phosphoserine modification is found at serine 85. The PHD-type 1 zinc finger occupies aspartate 200–glycine 250. A C2HC pre-PHD-type zinc finger spans residues tyrosine 252–valine 286. The PHD-type 2 zinc finger occupies leucine 310–serine 366. Disordered regions lie at residues leucine 372–leucine 395 and lysine 542–isoleucine 576. The segment covering aspartate 561–serine 575 has biased composition (low complexity). Phosphoserine is present on serine 566. The residue at position 601 (lysine 601) is an N6-acetyllysine. Position 608 is a phosphoserine (serine 608). Residues leucine 609–cysteine 630 are disordered. Lysine 638 is modified (N6-acetyllysine). Polar residues-rich tracts occupy residues serine 650–alanine 664 and tryptophan 673–serine 684. Residues serine 650–serine 684 are disordered. An N6-acetyllysine modification is found at lysine 735. Positions arginine 758–arginine 823 are disordered. A phosphoserine mark is found at serine 774, serine 776, and serine 780. Basic and acidic residues predominate over residues aspartate 781–glycine 809.

It belongs to the JADE family. As to quaternary structure, component of the HBO1 complex composed at least of ING4 or ING5, KAT7/HBO1, MEAF6, and one of JADE1, JADE2 and JADE3. As to expression, ubiquitously expressed, with highest levels in placenta and uterus.

Its function is as follows. Scaffold subunit of some HBO1 complexes, which have a histone H4 acetyltransferase activity. This is Protein Jade-3 (JADE3) from Homo sapiens (Human).